The chain runs to 429 residues: MSTDSIEVAIIGAGITGITLALGLLSRGIPVRVYERARDFHEIGAGIGFTPNAEWAMKVVDPRIQAAFKRVATPNASDWFQWVDGFNESGTDPRETEEQLLFKIYLGERGFEGCHRADFLGELARLLPEGVVTFQKALDTVEPAADNSLGQLLRFQDGTTATAHAVIGCDGIRSRVRQILLGEDHPTASAHYSHKYAARGLIPMDRAREALGEDKVATRFMHLGPDAHALTFPVSHGSLLNVVAFVTDPNPWPYADRWTAQGPKKDVTAAFSRFGPTMRTIIDLLPDPIDQWAVFDTYDHPPNTYSRGAVCIAGDAAHAAAPHHGAGAGCGVEDAAVLCAVLHMAAKKVNTAKTGSEGKAALITAAFETYDSVCRERAQWLVESSRVIGNLCHDEVYWRSHRIWDYDIDAMMRETAEVFEAQVAGVARN.

Residues 5–25 (SIEVAIIGAGITGITLALGLL) traverse the membrane as a helical segment. FAD contacts are provided by E35 and G48. Residues N75 and N87 are each glycosylated (N-linked (GlcNAc...) asparagine). R116 provides a ligand contact to FAD. The active site involves R199. D315 and A328 together coordinate FAD.

The protein belongs to the paxM FAD-dependent monooxygenase family. FAD is required as a cofactor.

The protein resides in the membrane. Its pathway is secondary metabolite biosynthesis. In terms of biological role, FAD-dependent monooxygenase; part of the gene cluster that mediates the biosynthesis of azaphilones, a class of fungal metabolites characterized by a highly oxygenated pyrano-quinone bicyclic core and exhibiting a broad range of bioactivities. In the first step, the non-reducing polyketide synthase azaA forms the hexaketide precursor from successive condensations of five malonyl-CoA units, presumably with a simple acetyl-CoA starter unit. The reactive polyketide chain then undergoes a PT-mediated C2-C7 cyclization to afford the aromatic ring and is eventually released as an aldehyde through the R-domain. The putative ketoreductase azaE is proposed to catalyze the reduction of the terminal ketone resulting in the early culture product FK17-P2a. The monooxygenase azaH was demonstrated to be the only enzyme required to convert FK17-P2a to azanigerone E. AzaH first hydroxylates the benzaldehyde intermediate FK17-P2a at C4, which triggers the formation of the pyran-ring to afford azanigerone E. In parallel, the 2,4-dimethylhexanoyl chain is synthesized by the HR-PKS azaB and is proposed to be transferred to the C4-hydroxyl of azanigerone E by the acyltransferase azaD directly from the ACP domain of azaB. Alternatively, the 2,4-dimethyl-hexanoyl chain may be offloaded from the HR-PKS as a carboxylic acid and converted to an acyl-CoA by azaF. The resulting acyl-CoA molecule could then be taken up as a substrate by AzaD to form azanigerone B. To yield the carboxylic acid substituent in azanigerone A, the hydroxypropyl side chain of azanigerone B would need to undergo a C-C oxidative cleavage catalyzed by cytochrome P450 AzaI. AzaI is proposed to act on a vicinal diol that leads to a C-C bond scission either through an alkoxyradical intermediate or a peroxy complex. In the biosynthesis of azanigerone A, azanigerone B first undergoes hydroxylation at C10, possibly catalyzed by one of the two FAD-dependent monooxygenases encoded in the cluster, azaG or azaL, resulting in the vicinal diol azanigerone C. Oxidative cleavage of azanigerone C by azaI would yield the corresponding aldehyde derivative of azanigerone A. Finally, the dehydrogenase azaJ is proposed to convert the aldehyde functional group into the carboxylic acid, completing the conversion from azanigerone B to azanigerone A. Alternatively, the oxidation of aldehyde to carboxylic acid may be catalyzed by the same P450 enzyme azaI via consecutive oxidation or by endogenous alcohol dehydrogenase. The polypeptide is FAD-dependent monooxygenase azaH (Aspergillus niger (strain ATCC 1015 / CBS 113.46 / FGSC A1144 / LSHB Ac4 / NCTC 3858a / NRRL 328 / USDA 3528.7)).